Reading from the N-terminus, the 475-residue chain is Glycogen synthase (475 aa).

K15 is a binding site for ADP-alpha-D-glucose.

It belongs to the glycosyltransferase 1 family. Bacterial/plant glycogen synthase subfamily.

The catalysed reaction is [(1-&gt;4)-alpha-D-glucosyl](n) + ADP-alpha-D-glucose = [(1-&gt;4)-alpha-D-glucosyl](n+1) + ADP + H(+). Its pathway is glycan biosynthesis; glycogen biosynthesis. Functionally, synthesizes alpha-1,4-glucan chains using ADP-glucose. The chain is Glycogen synthase from Chlamydia felis (strain Fe/C-56) (Chlamydophila felis).